We begin with the raw amino-acid sequence, 288 residues long: DegV domain-containing protein SAS0714 (288 aa).

Residues 3 to 282 (IAVMTDSTSY…SGGLGLGYVG (280 aa)) enclose the DegV domain. Hexadecanoate contacts are provided by Thr-62 and Ser-95.

May bind long-chain fatty acids, such as palmitate, and may play a role in lipid transport or fatty acid metabolism. This chain is DegV domain-containing protein SAS0714, found in Staphylococcus aureus (strain MSSA476).